The chain runs to 805 residues: Arginine/serine-rich protein PNISR (805 aa).

Polar residues predominate over residues 74–88 (PNNHGNFQGDSNFNR). Disordered regions lie at residues 74–331 (PNNH…EEKE) and 382–805 (LTGL…SRSR). Pro residues-rich tracts occupy residues 100–115 (PPHP…PTPG) and 183–195 (YWQP…PAPP). A compositionally biased stretch (basic and acidic residues) spans 197–210 (NRRERPSSFRDRQR). A phosphoserine mark is found at serine 204 and serine 211. Residue lysine 218 forms a Glycyl lysine isopeptide (Lys-Gly) (interchain with G-Cter in SUMO2) linkage. Positions 237–276 (REGLEKMEREKQKKLEKERMEQQRSQLSKKEKKATEDAEG) form a coiled coil. The span at 238–258 (EGLEKMEREKQKKLEKERMEQ) shows a compositional bias: basic and acidic residues. Serine 290, serine 304, serine 313, and serine 321 each carry phosphoserine. A compositionally biased stretch (acidic residues) spans 290–299 (SDEEEEDTEN). Positions 384–393 (GLGGLGGYGS) are enriched in gly residues. Positions 421 to 463 (QKQEAFWRKEKEQQLLHDKQMEEEKQQTERVTKEMNEFIHKEQ) are enriched in basic and acidic residues. Residues 429–461 (KEKEQQLLHDKQMEEEKQQTERVTKEMNEFIHK) are a coiled coil. Phosphoserine is present on residues serine 465 and serine 467. 2 stretches are compositionally biased toward basic and acidic residues: residues 470 to 486 (EARE…KRTP) and 494 to 506 (EPKK…EKQG). The residue at position 485 (threonine 485) is a Phosphothreonine. Lysine 496 is covalently cross-linked (Glycyl lysine isopeptide (Lys-Gly) (interchain with G-Cter in SUMO2)). Over residues 508 to 550 (SRSGSSSSGSSSSNSRTSSTSSTVSSSSYSSSSGSSRTSSRSS) the composition is skewed to low complexity. Basic residues-rich tracts occupy residues 551–579 (SPKR…YSRR), 587–598 (ARVKIRDRRRSN), and 607–639 (RRNR…SRDR). A compositionally biased stretch (basic and acidic residues) spans 659–721 (EAKEQERKKE…KRKRESERTF (63 aa)). Residues 673 to 703 (IDKDRKKKDKEREREQDKRKEKQKREEKDFK) are a coiled coil. Lysine 703 participates in a covalent cross-link: Glycyl lysine isopeptide (Lys-Gly) (interchain with G-Cter in SUMO2). Position 726 is a phosphoserine (serine 726). Basic and acidic residues predominate over residues 732-753 (IRHDSRQDSKKSTTKDSKKHSG). The segment covering 754–767 (SDSSGRSSSESPGS) has biased composition (low complexity). Composition is skewed to basic residues over residues 771–781 (KKAKKPKHSRS) and 789–805 (RSGK…SRSR).

This sequence belongs to the splicing factor SR family. In terms of assembly, interacts with PNN. As to expression, expressed in heart, skeletal muscle, thymus, spleen, kidney, liver, placenta and leukocytes.

Its subcellular location is the nucleus speckle. This is Arginine/serine-rich protein PNISR (PNISR) from Homo sapiens (Human).